We begin with the raw amino-acid sequence, 247 residues long: Eukaryotic translation initiation factor 6 (247 aa).

Phosphoserine; by CK1 occurs at positions 174 and 175.

This sequence belongs to the eIF-6 family. In terms of assembly, monomer. Associates with the 60S ribosomal subunit. Post-translationally, phosphorylation at Ser-174 and Ser-175 promotes nuclear export.

It is found in the cytoplasm. The protein localises to the nucleus. The protein resides in the nucleolus. Binds to the 60S ribosomal subunit and prevents its association with the 40S ribosomal subunit to form the 80S initiation complex in the cytoplasm. Is also involved in ribosome biogenesis. Associates with pre-60S subunits in the nucleus and is involved in its nuclear export. This Emericella nidulans (strain FGSC A4 / ATCC 38163 / CBS 112.46 / NRRL 194 / M139) (Aspergillus nidulans) protein is Eukaryotic translation initiation factor 6 (tif6).